A 424-amino-acid chain; its full sequence is GTPase Obg (424 aa).

In terms of domain architecture, Obg spans 1–159 (MVFIDTARIY…MWVRLELKLL (159 aa)). The OBG-type G domain occupies 160 to 330 (ADVGLVGFPN…LLDKTIEILS (171 aa)). GTP contacts are provided by residues 166–173 (GFPNAGKS), 191–195 (FTTLT), 212–215 (DIPG), 282–285 (NKMD), and 311–313 (SAL). 2 residues coordinate Mg(2+): S173 and T193. Residues 347-424 (NPPEEEETLE…VRDFEFEYYE (78 aa)) enclose the OCT domain.

Belongs to the TRAFAC class OBG-HflX-like GTPase superfamily. OBG GTPase family. In terms of assembly, monomer. Requires Mg(2+) as cofactor.

It localises to the cytoplasm. Functionally, an essential GTPase which binds GTP, GDP and possibly (p)ppGpp with moderate affinity, with high nucleotide exchange rates and a fairly low GTP hydrolysis rate. Plays a role in control of the cell cycle, stress response, ribosome biogenesis and in those bacteria that undergo differentiation, in morphogenesis control. This is GTPase Obg from Caldanaerobacter subterraneus subsp. tengcongensis (strain DSM 15242 / JCM 11007 / NBRC 100824 / MB4) (Thermoanaerobacter tengcongensis).